Consider the following 693-residue polypeptide: MAREFSLEKTRNIGIMAHVDAGKTTTTERILYYTGKIHKIGETHEGASQMDWMEQEQERGITITSAATTAQWNNHRVNIIDTPGHVDFTIEVQRSLRVLDGAVTVLDSQSGVEPQTETVWRQATEYGVPRIVFANKMDKIGADFLYSVSTLHERLQANAHPIQLPIGSEDEFRGIIDLIKMKAEIYTNDLGTDILEEDIPAEYLEQAEEYREKLVEAVAETDEELMMKYLEGEEITNDELKAAIRKATINVEFFPVLCGSAFKNKGVQLMLDAVIDYLPSPLDIPAIKGVNPDTDAEEERHASDEEPFAALAFKIMTDPFVGRLTFFRVYSGVLNSGSYVLNTSKGKRERIGRILQMHANSRQEIETVYAGDIAAAVGLKDTTTGDSLTDEKAKIILESIHVPEPVIQLMVEPKSKADQDKMGIALSKLAEEDPTFRVETNVETGETVISGMGELHLDVLVDRMRREFKVEANVGAPQVSYRETFRASTQARGFFKRQSGGKGQFGDVWIEFTPNEEGKGFEFENAIVGGVVPREFIPAVEKGLVESMANGVLAGYPIVDVKAKLYDGSYHDVDSSETAFKVAASLALKEAAKSAQPTILEPMMLVTITAPEDNLGDVMGHVTARRGRVDGMEARGNTQIVRAYVPLAEMFGYATVLRSATQGRGTFMMVFDHYEDVPKSVQDEIIKKNGGNA.

The region spanning 8–282 is the tr-type G domain; it reads EKTRNIGIMA…AVIDYLPSPL (275 aa). Residues 17 to 24, 81 to 85, and 135 to 138 each bind GTP; these read AHVDAGKT, DTPGH, and NKMD.

The protein belongs to the TRAFAC class translation factor GTPase superfamily. Classic translation factor GTPase family. EF-G/EF-2 subfamily.

Its subcellular location is the cytoplasm. Catalyzes the GTP-dependent ribosomal translocation step during translation elongation. During this step, the ribosome changes from the pre-translocational (PRE) to the post-translocational (POST) state as the newly formed A-site-bound peptidyl-tRNA and P-site-bound deacylated tRNA move to the P and E sites, respectively. Catalyzes the coordinated movement of the two tRNA molecules, the mRNA and conformational changes in the ribosome. In Streptococcus suis (strain 05ZYH33), this protein is Elongation factor G.